Here is a 124-residue protein sequence, read N- to C-terminus: Large ribosomal subunit protein uL22 (124 aa).

The protein belongs to the universal ribosomal protein uL22 family. Part of the 50S ribosomal subunit.

In terms of biological role, this protein binds specifically to 23S rRNA; its binding is stimulated by other ribosomal proteins, e.g. L4, L17, and L20. It is important during the early stages of 50S assembly. It makes multiple contacts with different domains of the 23S rRNA in the assembled 50S subunit and ribosome. The globular domain of the protein is located near the polypeptide exit tunnel on the outside of the subunit, while an extended beta-hairpin is found that lines the wall of the exit tunnel in the center of the 70S ribosome. This Buchnera aphidicola subsp. Cinara cedri (strain Cc) protein is Large ribosomal subunit protein uL22.